Here is a 219-residue protein sequence, read N- to C-terminus: Outer membrane virulence protein YopE (219 aa).

The segment at 1 to 37 (MKISSFISTSLPLPTSVSGSSSVGEMSGRSVSQQTSD) is disordered. Residues 8–32 (STSLPLPTSVSGSSSVGEMSGRSVS) show a composition bias toward low complexity. In terms of domain architecture, Bacterial Rho-GAP spans 101 to 219 (SFSDSIKQLA…QQMQKLLSLM (119 aa)).

It belongs to the YopE family.

It localises to the cell outer membrane. Functionally, essential virulence determinant; cytotoxic effector, involved in resistance to phagocytosis. The sequence is that of Outer membrane virulence protein YopE (yopE) from Yersinia pestis.